The sequence spans 2319 residues: Coagulation factor VIII (2319 aa).

A signal peptide spans 1–19 (MQIALFACFFLSLFNFCSS). 2 Plastocyanin-like domains span residues 20 to 199 (AIRR…LLVC) and 207 to 349 (ERTQ…VDSC). One can recognise an F5/8 type A 1 domain in the interval 20–349 (AIRRYYLGAV…MEAYVKVDSC (330 aa)). N-linked (GlcNAc...) asparagine glycosylation is present at Asn61. Cys173 and Cys199 are oxidised to a cystine. Asn233 and Asn259 each carry an N-linked (GlcNAc...) asparagine glycan. Position 367 is a sulfotyrosine (Tyr367). Plastocyanin-like domains are found at residues 399-573 (KTWI…LLIC) and 583-730 (NQMM…VSSC). In terms of domain architecture, F5/8 type A 2 spans 399 to 730 (KTWIHYISAE…MTALLKVSSC (332 aa)). A glycan (N-linked (GlcNAc...) asparagine) is linked at Asn423. Residues Cys547 and Cys573 are joined by a disulfide bond. Asn601 carries N-linked (GlcNAc...) asparagine glycosylation. Residues Tyr737, Tyr738, and Tyr742 each carry the sulfotyrosine modification. The b stretch occupies residues 760 to 1640 (SFFQNTNHPN…IPPVLKRHQR (881 aa)). N-linked (GlcNAc...) asparagine glycans are attached at residues Asn880, Asn958, Asn1015, Asn1022, Asn1026, Asn1044, Asn1076, Asn1087, Asn1136, Asn1161, Asn1192, Asn1255, Asn1268, Asn1273, Asn1274, Asn1302, Asn1316, Asn1340, and Asn1378. The interval 1530–1549 (WNKAKRHGESIKGKTESSKN) is disordered. The span at 1536–1548 (HGESIKGKTESSK) shows a compositional bias: basic and acidic residues. Residues Tyr1669 and Tyr1687 each carry the sulfotyrosine modification. Plastocyanin-like domains follow at residues 1683 to 1845 (KTRH…LLIC) and 1855 to 2008 (GRQV…SKQC). Residues 1683–2008 (KTRHYFIAAV…TLFLVYSKQC (326 aa)) enclose the F5/8 type A 3 domain. A glycan (N-linked (GlcNAc...) asparagine) is linked at Asn1797. 3 disulfides stabilise this stretch: Cys1819-Cys1845, Cys2008-Cys2156, and Cys2161-Cys2313. F5/8 type C domains are found at residues 2008-2156 (CQIP…LMGC) and 2161-2313 (CSIP…ILGC). Asn2105 carries an N-linked (GlcNAc...) asparagine glycan.

The protein belongs to the multicopper oxidase family. As to quaternary structure, interacts with vWF. vWF binding is essential for the stabilization of F8 in circulation. In terms of processing, the binding of vWF and activation depend on the sulfation of Tyr-1669. Proteolytically cleaved by cathepsin CTSG to produce a partially activated form. Found in most tissues.

It is found in the secreted. The protein localises to the extracellular space. In terms of biological role, factor VIII, along with calcium and phospholipid, acts as a cofactor for factor IXa when it converts factor X to the activated form, factor Xa. The protein is Coagulation factor VIII (F8) of Mus musculus (Mouse).